A 508-amino-acid polypeptide reads, in one-letter code: Photosystem II CP47 reaction center protein (508 aa).

6 consecutive transmembrane segments (helical) span residues 21–36 (SVHIMHTALVAGWAGS), 101–115 (IVFSGLCFLAAIWHW), 140–156 (GIHLFLSGVACFGFGAF), 203–218 (IAAGTLGILAGLFHLS), 237–252 (VLSSSIAAVFFAAFVV), and 457–472 (SFALLFFFGHIWHGAR).

Belongs to the PsbB/PsbC family. PsbB subfamily. PSII is composed of 1 copy each of membrane proteins PsbA, PsbB, PsbC, PsbD, PsbE, PsbF, PsbH, PsbI, PsbJ, PsbK, PsbL, PsbM, PsbT, PsbX, PsbY, PsbZ, Psb30/Ycf12, at least 3 peripheral proteins of the oxygen-evolving complex and a large number of cofactors. It forms dimeric complexes. Requires Binds multiple chlorophylls. PSII binds additional chlorophylls, carotenoids and specific lipids. as cofactor.

The protein localises to the plastid. Its subcellular location is the chloroplast thylakoid membrane. In terms of biological role, one of the components of the core complex of photosystem II (PSII). It binds chlorophyll and helps catalyze the primary light-induced photochemical processes of PSII. PSII is a light-driven water:plastoquinone oxidoreductase, using light energy to abstract electrons from H(2)O, generating O(2) and a proton gradient subsequently used for ATP formation. In Manihot esculenta (Cassava), this protein is Photosystem II CP47 reaction center protein.